The following is a 312-amino-acid chain: Putative endo-1,4-beta-xylanase (312 aa).

Residues 1-301 (MKQQYLLDYE…KPCFYSFLQA (301 aa)) enclose the GH10 domain. Glu-104 functions as the Proton donor in the catalytic mechanism. Catalysis depends on Glu-216, which acts as the Nucleophile.

The protein belongs to the glycosyl hydrolase 10 (cellulase F) family.

The enzyme catalyses Endohydrolysis of (1-&gt;4)-beta-D-xylosidic linkages in xylans.. It functions in the pathway glycan degradation; xylan degradation. Could be a xylanase. This Caldicellulosiruptor saccharolyticus (Caldocellum saccharolyticum) protein is Putative endo-1,4-beta-xylanase.